A 506-amino-acid chain; its full sequence is Zinc finger and SCAN domain containing protein 4F (506 aa).

Residues 1 to 24 (MASQQAPAKDLQTNNLEFTPTDSS) are disordered. One can recognise an SCAN box domain in the interval 37–119 (SAQLNFSPSN…RFMESLTDEC (83 aa)). 4 C2H2-type zinc fingers span residues 395–417 (YKCEECSRMFKHARSLSSHQRTH), 424–446 (LLCVTCQKMFKRVSDRRTHEIIH), 452–474 (FKCSTCEKSFSHKTNLKSHEMIH), and 480–503 (YVCSLCSRRFRQSSTYHRHLRNYH).

Up-regulated in blastocyst outgrowths and is detectable in a mosaic fashion in ES cultures.

It localises to the nucleus. Its subcellular location is the chromosome. The protein resides in the telomere. Its function is as follows. Transcription factor required to regulate early development. Binds telomeres and plays a key role in genomic stability by regulating telomere elongation. Acts as an activator of spontaneous telomere sister chromatid exchange (T-SCE) and telomere elongation. This is Zinc finger and SCAN domain containing protein 4F (Zscan4f) from Mus musculus (Mouse).